A 122-amino-acid polypeptide reads, in one-letter code: Small ribosomal subunit protein uS13 (122 aa).

A disordered region spans residues Lys94 to Lys122.

It belongs to the universal ribosomal protein uS13 family. Part of the 30S ribosomal subunit. Forms a loose heterodimer with protein S19. Forms two bridges to the 50S subunit in the 70S ribosome.

Located at the top of the head of the 30S subunit, it contacts several helices of the 16S rRNA. In the 70S ribosome it contacts the 23S rRNA (bridge B1a) and protein L5 of the 50S subunit (bridge B1b), connecting the 2 subunits; these bridges are implicated in subunit movement. Contacts the tRNAs in the A and P-sites. This is Small ribosomal subunit protein uS13 from Methylorubrum populi (strain ATCC BAA-705 / NCIMB 13946 / BJ001) (Methylobacterium populi).